Consider the following 127-residue polypeptide: Aspartate 1-decarboxylase (127 aa).

Serine 25 (schiff-base intermediate with substrate; via pyruvic acid) is an active-site residue. Serine 25 bears the Pyruvic acid (Ser) mark. Residue threonine 57 coordinates substrate. The active-site Proton donor is tyrosine 58. Position 73–75 (73–75 (GAA)) interacts with substrate.

The protein belongs to the PanD family. Heterooctamer of four alpha and four beta subunits. Pyruvate serves as cofactor. In terms of processing, is synthesized initially as an inactive proenzyme, which is activated by self-cleavage at a specific serine bond to produce a beta-subunit with a hydroxyl group at its C-terminus and an alpha-subunit with a pyruvoyl group at its N-terminus.

Its subcellular location is the cytoplasm. It catalyses the reaction L-aspartate + H(+) = beta-alanine + CO2. It participates in cofactor biosynthesis; (R)-pantothenate biosynthesis; beta-alanine from L-aspartate: step 1/1. In terms of biological role, catalyzes the pyruvoyl-dependent decarboxylation of aspartate to produce beta-alanine. The sequence is that of Aspartate 1-decarboxylase from Clostridium kluyveri (strain NBRC 12016).